Consider the following 966-residue polypeptide: Catenin alpha-2 (966 aa).

The span at 924 to 940 (PEKKPLVKREKPEEYQT) shows a compositional bias: basic and acidic residues. The disordered stretch occupies residues 924–952 (PEKKPLVKREKPEEYQTRVRRGSQKKHIS). Over residues 941–951 (RVRRGSQKKHI) the composition is skewed to basic residues.

It belongs to the vinculin/alpha-catenin family.

Its subcellular location is the cell membrane. It localises to the cytoplasm. It is found in the cytoskeleton. The protein localises to the cell junction. The protein resides in the adherens junction. Its subcellular location is the cell projection. It localises to the axon. It is found in the nucleus. Functionally, may function as a linker between cadherin adhesion receptors and the cytoskeleton to regulate cell-cell adhesion and differentiation in the nervous system. The protein is Catenin alpha-2 (ctnna2) of Xenopus laevis (African clawed frog).